Here is a 65-residue protein sequence, read N- to C-terminus: Keratin-associated protein 23-1 (65 aa).

Interacts with hair keratins.

Its function is as follows. In the hair cortex, hair keratin intermediate filaments are embedded in an interfilamentous matrix, consisting of hair keratin-associated proteins (KRTAP), which are essential for the formation of a rigid and resistant hair shaft through their extensive disulfide bond cross-linking with abundant cysteine residues of hair keratins. The matrix proteins include the high-sulfur and high-glycine-tyrosine keratins. The chain is Keratin-associated protein 23-1 (KRTAP23-1) from Homo sapiens (Human).